The sequence spans 253 residues: Triosephosphate isomerase (253 aa).

Asn-9 to Lys-11 lines the substrate pocket. His-96 functions as the Electrophile in the catalytic mechanism. The active-site Proton acceptor is the Glu-168. Residues Gly-174, Ser-213, and Gly-234–Gly-235 each bind substrate.

This sequence belongs to the triosephosphate isomerase family. In terms of assembly, homodimer.

Its subcellular location is the cytoplasm. The enzyme catalyses D-glyceraldehyde 3-phosphate = dihydroxyacetone phosphate. It functions in the pathway carbohydrate biosynthesis; gluconeogenesis. The protein operates within carbohydrate degradation; glycolysis; D-glyceraldehyde 3-phosphate from glycerone phosphate: step 1/1. Its function is as follows. Involved in the gluconeogenesis. Catalyzes stereospecifically the conversion of dihydroxyacetone phosphate (DHAP) to D-glyceraldehyde-3-phosphate (G3P). The protein is Triosephosphate isomerase of Hydrogenovibrio crunogenus (strain DSM 25203 / XCL-2) (Thiomicrospira crunogena).